The primary structure comprises 272 residues: Exosome complex component Rrp42 (272 aa).

Belongs to the RNase PH family. Rrp42 subfamily. As to quaternary structure, component of the archaeal exosome complex. Forms a hexameric ring-like arrangement composed of 3 Rrp41-Rrp42 heterodimers. The hexameric ring associates with a trimer of Rrp4 and/or Csl4 subunits.

Its subcellular location is the cytoplasm. Functionally, non-catalytic component of the exosome, which is a complex involved in RNA degradation. Contributes to the structuring of the Rrp41 active site. The sequence is that of Exosome complex component Rrp42 from Thermococcus onnurineus (strain NA1).